Reading from the N-terminus, the 544-residue chain is Prolyl 4-hydroxylase subunit alpha-3 (544 aa).

The N-terminal stretch at 1-24 (MGPGARLAALLVLLKLGVGDPAAA) is a signal peptide. One copy of the TPR repeat lies at 227–260 (EDALDYLAFACYQVGNVSCALSLSREFLVYSPDN). The N-linked (GlcNAc...) asparagine glycan is linked to asparagine 242. Residues 422-529 (YAEYLQVVNY…KWVANKWIHE (108 aa)) form the Fe2OG dioxygenase domain. Histidine 440 and aspartate 442 together coordinate Fe cation. Residue asparagine 482 is glycosylated (N-linked (GlcNAc...) asparagine). Histidine 510 contributes to the Fe cation binding site. Lysine 520 is a 2-oxoglutarate binding site.

This sequence belongs to the P4HA family. As to quaternary structure, heterotetramer of two alpha-3 chains and two beta chains (the beta chain is the multi-functional PDI). Fe(2+) is required as a cofactor. The cofactor is L-ascorbate. In terms of processing, N-glycosylation plays no role in the catalytic activity.

The protein resides in the endoplasmic reticulum lumen. It catalyses the reaction L-prolyl-[collagen] + 2-oxoglutarate + O2 = trans-4-hydroxy-L-prolyl-[collagen] + succinate + CO2. Functionally, catalyzes the post-translational formation of 4-hydroxyproline in -Xaa-Pro-Gly- sequences in collagens and other proteins. The chain is Prolyl 4-hydroxylase subunit alpha-3 (P4ha3) from Rattus norvegicus (Rat).